The following is a 142-amino-acid chain: MAAMTVQLDMVSAENHIFSGRVAQLQVSGTEGELGIMPGHAALLTSIKPGMARIVKQNGSEEVFYLSGGILEVQPSSISVLADVVLRADEIDEQAAAEAKLRAETAMAGAGADFNYAAAAVELAQAIAQLRVVETIKKNIAR.

Belongs to the ATPase epsilon chain family. F-type ATPases have 2 components, CF(1) - the catalytic core - and CF(0) - the membrane proton channel. CF(1) has five subunits: alpha(3), beta(3), gamma(1), delta(1), epsilon(1). CF(0) has three main subunits: a, b and c.

The protein localises to the cell inner membrane. Produces ATP from ADP in the presence of a proton gradient across the membrane. In Shewanella pealeana (strain ATCC 700345 / ANG-SQ1), this protein is ATP synthase epsilon chain.